A 24-amino-acid chain; its full sequence is Carboxypeptidase 1 (24 aa).

N-linked (GlcNAc...) asparagine glycans are attached at residues Asn-3 and Asn-11.

The protein belongs to the peptidase S10 family. Monomer. Contains both N- and O-linked sugar chains. The N-linked oligosaccharides are unique structures of Man(10)GlcNAc(2) and Man(11)GlcNAc(2). Deglycosylation does neither affect catalytic activity, pH, thermal stability, or resistance to proteolysis of the enzyme.

It localises to the secreted. With respect to regulation, inhibited by DFP. Functionally, removes acidic, neutral and basic amino acids as well as proline from the C-terminal position. Digests preferentially peptides containing a hydrophobic residue in P1' position, as well as arginine, lysine or phenylalanine in P1 position of ester substrate. Catalyzes also peptide synthesis. The chain is Carboxypeptidase 1 from Aspergillus niger.